A 331-amino-acid chain; its full sequence is Pectinesterase (331 aa).

The N-terminal stretch at 1–17 (MVKSVLASALFAVSALA) is a signal peptide. Position 139 (Gln139) interacts with substrate. Asp162 (proton donor) is an active-site residue. Asp183 functions as the Nucleophile in the catalytic mechanism. Positions 248 and 250 each coordinate substrate.

The protein belongs to the pectinesterase family.

It is found in the secreted. The enzyme catalyses [(1-&gt;4)-alpha-D-galacturonosyl methyl ester](n) + n H2O = [(1-&gt;4)-alpha-D-galacturonosyl](n) + n methanol + n H(+). The protein operates within glycan metabolism; pectin degradation; 2-dehydro-3-deoxy-D-gluconate from pectin: step 1/5. Its function is as follows. Involved in maceration and soft-rotting of plant tissue. The polypeptide is Pectinesterase (pme1) (Aspergillus aculeatus).